We begin with the raw amino-acid sequence, 554 residues long: Propanediol dehydratase large subunit (554 aa).

This sequence belongs to the diol/glycerol dehydratase large subunit family. The propanediol dehydratase enzyme is a heterotrimeric complex composed of a large (PduC), a medium (PduD) and a small (PduE) subunit. The cofactor is adenosylcob(III)alamin.

It localises to the bacterial microcompartment. It catalyses the reaction propane-1,2-diol = propanal + H2O. The protein operates within polyol metabolism; 1,2-propanediol degradation. In terms of biological role, part of the PduCDE complex that catalyzes the dehydration of 1,2-propanediol (1,2-PD) to propionaldehyde. This subunit is directly targeted to the bacterial microcompartment (BMC). Functionally, expression of a cosmid containing the full 21-gene pdu operon in E.coli allows E.coli to grow on 1,2-propanediol (1,2-PD) with the appearance of BMCs in its cytoplasm. The 1,2-PD-specific bacterial microcompartment (BMC) concentrates low levels of 1,2-PD catabolic enzymes, concentrates volatile reaction intermediates thus enhancing pathway flux and keeps the level of toxic, mutagenic propionaldehyde low. In Citrobacter freundii, this protein is Propanediol dehydratase large subunit.